The following is a 101-amino-acid chain: HssA/B-like protein 40 (101 aa).

Positions 1 to 26 are disordered; sequence MTLFSSISSMSTSMSGSKSSISSFGS.

It belongs to the hssA/B family.

In Dictyostelium discoideum (Social amoeba), this protein is HssA/B-like protein 40 (hssl40).